The following is a 760-amino-acid chain: MAMEQFESVFTAKENAEIAKEFTRLKDTCYLDHAGTTLYADSQIRAVGDCLTGSLFCNPHTSRTTEDLLDQVRFRVLRHFGTHPSEYGLVFTSGTTGALKLVAECFDFGDEGAFVYTRDNHTSVLGMRAVVGTERIVPIGREDLRGGRSTGGGKSSLVVFPAQCNFNGFKYPLGLVEDIQRNGLVGFDGDRFHVCLDAASFVSTNALDLAKHQPSFVCLSFYKIFGFPTGLGALLVHRSAQNLLKKRYYGGGTVKIAMAGRNFHVKRDSLADQFEDGTVPFTSIISLLQGFETLERLVPASGELSSIDRVSRHTFALGRYCFQRLRGLRHANSNSVVKLYHDTEFEDRGSQGGIVNFNVLHEDGSFVGFAEVAYMASVHNVVLRTGCFCNPGACQRLLELTDEDVLKQFNAGHVCGDANDLIGGQPTGSVRVSFGYMSRREDVDRLVEMVEKCYVKKMTANGLTRKQIVSNYKNYDQPKLKMICLFPIKSCGAYKITTSWPLCHKGLKHDREFVIVDENGVAMTQKKLVEMCLIKPKIDIKTNTLILTHPAMENFTLSMEPLSNESQSIKLCQTKVCQDNVQAIDCGDAVANWISIALQTSGLRLLKQSDDEARTLRKSTTEIALSNQAQFLLINQASVRWLADLVPDWDDLSQEPTLESLVDRFRGNLIIDSVKPLEESSWTQLRIGPLEFSVDGPCSRCQMICIDQSSGTRTAEPLRTIAREFKGKMRFGIYLSHVKSLEGSDEKLLHCGSPLQVVAE.

At Lys-223 the chain carries N6-(pyridoxal phosphate)lysine. Cys-389 is a catalytic residue. One can recognise an MOSC domain in the interval 608-758; sequence QSDDEARTLR…LHCGSPLQVV (151 aa).

It belongs to the class-V pyridoxal-phosphate-dependent aminotransferase family. MOCOS subfamily. Requires pyridoxal 5'-phosphate as cofactor.

The catalysed reaction is Mo-molybdopterin + L-cysteine + AH2 = thio-Mo-molybdopterin + L-alanine + A + H2O. Its function is as follows. Sulfurates the molybdenum cofactor. Sulfation of molybdenum is essential for xanthine dehydrogenase (XDH) and aldehyde oxidase (ADO) enzymes in which molybdenum cofactor is liganded by 1 oxygen and 1 sulfur atom in active form. This chain is Molybdenum cofactor sulfurase 2, found in Culex quinquefasciatus (Southern house mosquito).